Here is an 87-residue protein sequence, read N- to C-terminus: U3-theraphotoxin-Hhn1a 8 (87 aa).

The first 24 residues, 1–24 (MVNMKASMFLTFAGLVLLFVVCYA), serve as a signal peptide directing secretion. The propeptide occupies 25-52 (SGSEEKEFPKEMLSSIFAVDNDFKQEER). Intrachain disulfides connect cysteine 54–cysteine 67, cysteine 61–cysteine 72, and cysteine 66–cysteine 79.

Belongs to the neurotoxin 10 (Hwtx-1) family. 51 (Hntx-8) subfamily. Hntx-8 sub-subfamily. As to expression, expressed by the venom gland.

Its subcellular location is the secreted. Functionally, ion channel inhibitor. The chain is U3-theraphotoxin-Hhn1a 8 from Cyriopagopus hainanus (Chinese bird spider).